We begin with the raw amino-acid sequence, 246 residues long: 3-deoxy-manno-octulosonate cytidylyltransferase (246 aa).

This sequence belongs to the KdsB family.

It localises to the cytoplasm. The catalysed reaction is 3-deoxy-alpha-D-manno-oct-2-ulosonate + CTP = CMP-3-deoxy-beta-D-manno-octulosonate + diphosphate. It functions in the pathway nucleotide-sugar biosynthesis; CMP-3-deoxy-D-manno-octulosonate biosynthesis; CMP-3-deoxy-D-manno-octulosonate from 3-deoxy-D-manno-octulosonate and CTP: step 1/1. Its pathway is bacterial outer membrane biogenesis; lipopolysaccharide biosynthesis. In terms of biological role, activates KDO (a required 8-carbon sugar) for incorporation into bacterial lipopolysaccharide in Gram-negative bacteria. This is 3-deoxy-manno-octulosonate cytidylyltransferase from Rickettsia peacockii (strain Rustic).